A 139-amino-acid chain; its full sequence is Large ribosomal subunit protein uL22 (139 aa).

Residues 1-21 are disordered; that stretch reads MTAPTPEFRNKKQRKQQVKLR.

This sequence belongs to the universal ribosomal protein uL22 family. Part of the 50S ribosomal subunit.

Functionally, this protein binds specifically to 23S rRNA; its binding is stimulated by other ribosomal proteins, e.g. L4, L17, and L20. It is important during the early stages of 50S assembly. It makes multiple contacts with different domains of the 23S rRNA in the assembled 50S subunit and ribosome. Its function is as follows. The globular domain of the protein is located near the polypeptide exit tunnel on the outside of the subunit, while an extended beta-hairpin is found that lines the wall of the exit tunnel in the center of the 70S ribosome. This is Large ribosomal subunit protein uL22 from Deinococcus deserti (strain DSM 17065 / CIP 109153 / LMG 22923 / VCD115).